A 235-amino-acid chain; its full sequence is Large ribosomal subunit protein uL1 (235 aa).

It belongs to the universal ribosomal protein uL1 family. As to quaternary structure, part of the 50S ribosomal subunit.

Its function is as follows. Binds directly to 23S rRNA. The L1 stalk is quite mobile in the ribosome, and is involved in E site tRNA release. In terms of biological role, protein L1 is also a translational repressor protein, it controls the translation of the L11 operon by binding to its mRNA. The polypeptide is Large ribosomal subunit protein uL1 (Prochlorococcus marinus (strain MIT 9515)).